The sequence spans 305 residues: Putative UDP-glucose 4-epimerase (305 aa).

NAD(+) is bound by residues 10–11, 30–35, 50–51, and 71–75; these read FI, DNLTTG, DI, and QAAQI. 2 residues coordinate substrate: S115 and Y140. NAD(+)-binding residues include Y140 and K144. Residue Y140 is the Proton acceptor of the active site. Substrate-binding positions include N169, 183–184, 198–200, R207, and 263–266; these read VI, IIF, and REGE.

This sequence belongs to the NAD(P)-dependent epimerase/dehydratase family. It depends on NAD(+) as a cofactor.

The enzyme catalyses UDP-alpha-D-glucose = UDP-alpha-D-galactose. The protein operates within carbohydrate metabolism; galactose metabolism. Involved in the metabolism of galactose. Catalyzes the conversion of UDP-galactose (UDP-Gal) to UDP-glucose (UDP-Glc) through a mechanism involving the transient reduction of NAD. The chain is Putative UDP-glucose 4-epimerase from Methanocaldococcus jannaschii (strain ATCC 43067 / DSM 2661 / JAL-1 / JCM 10045 / NBRC 100440) (Methanococcus jannaschii).